We begin with the raw amino-acid sequence, 289 residues long: MATDAAEKANILAEALPYIREFAGKTIVIKYGGNAMTDDALKEGFAKDVVLLKLVGMNPVVVHGGGPQINDLLARVGKQGEFIQGMRVTDAETMEVVEMVLGGLVNKEIVSLINKHGGKAVGLTGKDGHFIRARKLFLKTDGDEDVDIGQVGEIEAIDPALVSLLDSQDFIPVVAPIGVGVDGEAYNINADLVAGKLAETLRAEKLVLMTNTPGVLDKQGQLLTGLTAQRIDELFADGTISGGMLPKISSALDAARNGVNSVHVIDGRVKHALLLEILTAAGVGTMIRA.

Residues 65-66 (GG), Arg-87, and Asn-187 each bind substrate.

The protein belongs to the acetylglutamate kinase family. ArgB subfamily.

It is found in the cytoplasm. The enzyme catalyses N-acetyl-L-glutamate + ATP = N-acetyl-L-glutamyl 5-phosphate + ADP. The protein operates within amino-acid biosynthesis; L-arginine biosynthesis; N(2)-acetyl-L-ornithine from L-glutamate: step 2/4. Its function is as follows. Catalyzes the ATP-dependent phosphorylation of N-acetyl-L-glutamate. The protein is Acetylglutamate kinase of Chromobacterium violaceum (strain ATCC 12472 / DSM 30191 / JCM 1249 / CCUG 213 / NBRC 12614 / NCIMB 9131 / NCTC 9757 / MK).